Consider the following 463-residue polypeptide: Siroheme synthase (463 aa).

The tract at residues 1 to 203 is precorrin-2 dehydrogenase /sirohydrochlorin ferrochelatase; the sequence is MDYLPLFHKL…GQGAEAERLL (203 aa). NAD(+) is bound by residues 22–23 and 43–44; these read EI and PD. S128 bears the Phosphoserine mark. The uroporphyrinogen-III C-methyltransferase stretch occupies residues 216–463; the sequence is GEVYLVGAGP…LAWFEGSQNS (248 aa). Residue P225 coordinates S-adenosyl-L-methionine. D248 acts as the Proton acceptor in catalysis. Residue K270 is the Proton donor of the active site. S-adenosyl-L-methionine is bound by residues 301-303, I306, 331-332, M383, and G412; these read GGD and TA.

The protein in the N-terminal section; belongs to the precorrin-2 dehydrogenase / sirohydrochlorin ferrochelatase family. It in the C-terminal section; belongs to the precorrin methyltransferase family.

It carries out the reaction uroporphyrinogen III + 2 S-adenosyl-L-methionine = precorrin-2 + 2 S-adenosyl-L-homocysteine + H(+). The enzyme catalyses precorrin-2 + NAD(+) = sirohydrochlorin + NADH + 2 H(+). The catalysed reaction is siroheme + 2 H(+) = sirohydrochlorin + Fe(2+). It participates in cofactor biosynthesis; adenosylcobalamin biosynthesis; precorrin-2 from uroporphyrinogen III: step 1/1. Its pathway is cofactor biosynthesis; adenosylcobalamin biosynthesis; sirohydrochlorin from precorrin-2: step 1/1. It functions in the pathway porphyrin-containing compound metabolism; siroheme biosynthesis; precorrin-2 from uroporphyrinogen III: step 1/1. The protein operates within porphyrin-containing compound metabolism; siroheme biosynthesis; siroheme from sirohydrochlorin: step 1/1. It participates in porphyrin-containing compound metabolism; siroheme biosynthesis; sirohydrochlorin from precorrin-2: step 1/1. Its function is as follows. Multifunctional enzyme that catalyzes the SAM-dependent methylations of uroporphyrinogen III at position C-2 and C-7 to form precorrin-2 via precorrin-1. Then it catalyzes the NAD-dependent ring dehydrogenation of precorrin-2 to yield sirohydrochlorin. Finally, it catalyzes the ferrochelation of sirohydrochlorin to yield siroheme. This Pseudomonas putida (strain ATCC 700007 / DSM 6899 / JCM 31910 / BCRC 17059 / LMG 24140 / F1) protein is Siroheme synthase.